Reading from the N-terminus, the 279-residue chain is Thymidylate synthase (279 aa).

Position 133–134 (133–134) interacts with dUMP; that stretch reads RR. The active-site Nucleophile is the Cys154. DUMP is bound by residues 178–181, Asn189, and 219–221; these read RSND and HIY. Asp181 provides a ligand contact to (6R)-5,10-methylene-5,6,7,8-tetrahydrofolate. Ala278 contacts (6R)-5,10-methylene-5,6,7,8-tetrahydrofolate.

This sequence belongs to the thymidylate synthase family. Bacterial-type ThyA subfamily. Homodimer.

Its subcellular location is the cytoplasm. The enzyme catalyses dUMP + (6R)-5,10-methylene-5,6,7,8-tetrahydrofolate = 7,8-dihydrofolate + dTMP. The protein operates within pyrimidine metabolism; dTTP biosynthesis. Catalyzes the reductive methylation of 2'-deoxyuridine-5'-monophosphate (dUMP) to 2'-deoxythymidine-5'-monophosphate (dTMP) while utilizing 5,10-methylenetetrahydrofolate (mTHF) as the methyl donor and reductant in the reaction, yielding dihydrofolate (DHF) as a by-product. This enzymatic reaction provides an intracellular de novo source of dTMP, an essential precursor for DNA biosynthesis. This Streptococcus pyogenes serotype M12 (strain MGAS2096) protein is Thymidylate synthase.